Here is a 306-residue protein sequence, read N- to C-terminus: Putative S-adenosyl-L-methionine-dependent methyltransferase Mvan_1345 (306 aa).

S-adenosyl-L-methionine contacts are provided by residues D134 and 163–164 (DL).

This sequence belongs to the UPF0677 family.

Its function is as follows. Exhibits S-adenosyl-L-methionine-dependent methyltransferase activity. In Mycolicibacterium vanbaalenii (strain DSM 7251 / JCM 13017 / BCRC 16820 / KCTC 9966 / NRRL B-24157 / PYR-1) (Mycobacterium vanbaalenii), this protein is Putative S-adenosyl-L-methionine-dependent methyltransferase Mvan_1345.